The following is a 498-amino-acid chain: Lysine--tRNA ligase (498 aa).

Positions 407 and 414 each coordinate Mg(2+).

Belongs to the class-II aminoacyl-tRNA synthetase family. Homodimer. Mg(2+) serves as cofactor.

Its subcellular location is the cytoplasm. It carries out the reaction tRNA(Lys) + L-lysine + ATP = L-lysyl-tRNA(Lys) + AMP + diphosphate. This Rhizobium etli (strain ATCC 51251 / DSM 11541 / JCM 21823 / NBRC 15573 / CFN 42) protein is Lysine--tRNA ligase.